The chain runs to 345 residues: Holliday junction branch migration complex subunit RuvB (345 aa).

The segment at 4–185 (TDRLIAPSTQ…FGIVSRLEFY (182 aa)) is large ATPase domain (RuvB-L). ATP contacts are provided by residues leucine 24, arginine 25, glycine 66, lysine 69, threonine 70, threonine 71, 132–134 (EDY), arginine 175, tyrosine 185, and arginine 222. Threonine 70 is a Mg(2+) binding site. The tract at residues 186–256 (TADELARIVH…IADAALKMLD (71 aa)) is small ATPAse domain (RuvB-S). Residues 259-345 (KLGFDVMDRK…KIGTGELWQQ (87 aa)) are head domain (RuvB-H). Arginine 295, arginine 314, and arginine 319 together coordinate DNA.

It belongs to the RuvB family. Homohexamer. Forms an RuvA(8)-RuvB(12)-Holliday junction (HJ) complex. HJ DNA is sandwiched between 2 RuvA tetramers; dsDNA enters through RuvA and exits via RuvB. An RuvB hexamer assembles on each DNA strand where it exits the tetramer. Each RuvB hexamer is contacted by two RuvA subunits (via domain III) on 2 adjacent RuvB subunits; this complex drives branch migration. In the full resolvosome a probable DNA-RuvA(4)-RuvB(12)-RuvC(2) complex forms which resolves the HJ.

The protein localises to the cytoplasm. The enzyme catalyses ATP + H2O = ADP + phosphate + H(+). Its function is as follows. The RuvA-RuvB-RuvC complex processes Holliday junction (HJ) DNA during genetic recombination and DNA repair, while the RuvA-RuvB complex plays an important role in the rescue of blocked DNA replication forks via replication fork reversal (RFR). RuvA specifically binds to HJ cruciform DNA, conferring on it an open structure. The RuvB hexamer acts as an ATP-dependent pump, pulling dsDNA into and through the RuvAB complex. RuvB forms 2 homohexamers on either side of HJ DNA bound by 1 or 2 RuvA tetramers; 4 subunits per hexamer contact DNA at a time. Coordinated motions by a converter formed by DNA-disengaged RuvB subunits stimulates ATP hydrolysis and nucleotide exchange. Immobilization of the converter enables RuvB to convert the ATP-contained energy into a lever motion, pulling 2 nucleotides of DNA out of the RuvA tetramer per ATP hydrolyzed, thus driving DNA branch migration. The RuvB motors rotate together with the DNA substrate, which together with the progressing nucleotide cycle form the mechanistic basis for DNA recombination by continuous HJ branch migration. Branch migration allows RuvC to scan DNA until it finds its consensus sequence, where it cleaves and resolves cruciform DNA. The chain is Holliday junction branch migration complex subunit RuvB from Methylobacillus flagellatus (strain ATCC 51484 / DSM 6875 / VKM B-1610 / KT).